The sequence spans 221 residues: MTEKIGVLGKKTTQRTDVERIVVTPLPTVYGKFRAFGYFDHERGDEQVALVHGDLGAEDVLTRLHSECLTGDAFGSQHCECGAQLASALRQVADAGSGIVVYLRGHEGRGIGLLAKLRAMALQAEGLDTVEANLALGLPVDARDYGVAARILDDLGVRSVRLMSNNPRKREALVRHGIRVAEQVPLLIPPCESNITYLRTKRERLDHHLPHLDAAMAHVSS.

A GTP-binding site is contributed by 63 to 67 (RLHSE). Positions 68, 79, and 81 each coordinate Zn(2+). GTP is bound by residues Gln84, 107-109 (EGR), and Thr129. Asp141 (proton acceptor) is an active-site residue. Arg143 (nucleophile) is an active-site residue. The GTP site is built by Ser164 and Lys169.

This sequence belongs to the GTP cyclohydrolase II family. Requires Zn(2+) as cofactor.

It carries out the reaction GTP + 4 H2O = 2,5-diamino-6-hydroxy-4-(5-phosphoribosylamino)-pyrimidine + formate + 2 phosphate + 3 H(+). Its pathway is cofactor biosynthesis; riboflavin biosynthesis; 5-amino-6-(D-ribitylamino)uracil from GTP: step 1/4. Functionally, catalyzes the conversion of GTP to 2,5-diamino-6-ribosylamino-4(3H)-pyrimidinone 5'-phosphate (DARP), formate and pyrophosphate. The protein is GTP cyclohydrolase-2 of Streptomyces coelicolor (strain ATCC BAA-471 / A3(2) / M145).